The chain runs to 993 residues: Isoleucine--tRNA ligase (993 aa).

The 'HIGH' region signature appears at 64–74; it reads PYANGNIHIGH. An L-isoleucyl-5'-AMP-binding site is contributed by Glu621. Positions 662–666 match the 'KMSKS' region motif; the sequence is KMSKS. Residue Lys665 coordinates ATP.

This sequence belongs to the class-I aminoacyl-tRNA synthetase family. IleS type 1 subfamily. In terms of assembly, monomer.

Its subcellular location is the cytoplasm. It catalyses the reaction tRNA(Ile) + L-isoleucine + ATP = L-isoleucyl-tRNA(Ile) + AMP + diphosphate. Catalyzes the attachment of isoleucine to tRNA(Ile). As IleRS can inadvertently accommodate and process structurally similar amino acids such as valine, to avoid such errors it has two additional distinct tRNA(Ile)-dependent editing activities. One activity is designated as 'pretransfer' editing and involves the hydrolysis of activated Val-AMP. The other activity is designated 'posttransfer' editing and involves deacylation of mischarged Val-tRNA(Ile). This is Isoleucine--tRNA ligase from Mesorhizobium japonicum (strain LMG 29417 / CECT 9101 / MAFF 303099) (Mesorhizobium loti (strain MAFF 303099)).